Consider the following 235-residue polypeptide: Claudin-16 (235 aa).

The Cytoplasmic portion of the chain corresponds to 1-3 (MKD). The helical transmembrane segment at 4 to 24 (LLQYAACFLAIFSTGFLIVAT) threads the bilayer. Residues 25-79 (RTDCWMVNADDSLEVSTKCRGLWWECVTNAFDGIRTCDEYDSIYAEHPLKLVVTR) are Extracellular-facing. Residues 80–100 (ALMITADILAGFGFITLLLGL) form a helical membrane-spanning segment. The Cytoplasmic portion of the chain corresponds to 101–115 (DCVKFLPDEPHIKVR). A helical membrane pass occupies residues 116–136 (LCFVAGTVLLIAGTPGIIGSV). Residues 137-169 (WYAVDVYVERSSLVLHNIFLGIQYKFGWSCWLG) lie on the Extracellular side of the membrane. A helical membrane pass occupies residues 170–190 (MAGSLGCFLAGALLTCCLYLF). At 191-235 (KDVGPERNYPYAMRKPYSTAGVSMAKSYKAPRTETAKMYAVDTRV) the chain is on the cytoplasmic side. Positions 233–235 (TRV) match the Interaction with TJP1 motif.

It belongs to the claudin family. As to quaternary structure, can form heteropolymeric tight junction strands with other claudins. Interacts with CLDN19. Interacts (via PDZ-binding motif TRV) with TJP1 (via PDZ domain). Cannot form tight junction strands on its own.

The protein localises to the cell junction. It localises to the tight junction. The protein resides in the cell membrane. It catalyses the reaction Mg(2+)(in) = Mg(2+)(out). It carries out the reaction Ca(2+)(in) = Ca(2+)(out). The enzyme catalyses Na(+)(in) = Na(+)(out). The catalysed reaction is K(+)(in) = K(+)(out). It catalyses the reaction Rb(+)(in) = Rb(+)(out). It carries out the reaction Cs(+)(in) = Cs(+)(out). The enzyme catalyses Li(+)(in) = Li(+)(out). Forms paracellular channels: coassembles with CLDN19 into tight junction strands with cation-selective channels through the strands, conveying epithelial permeability in a process known as paracellular tight junction permeability. Involved in the maintenance of ion gradients along the nephron. In the thick ascending limb (TAL) of Henle's loop, facilitates sodium paracellular permeability from the interstitial compartment to the lumen, contributing to the lumen-positive transepithelial potential that drives paracellular magnesium and calcium reabsorption. The protein is Claudin-16 of Rattus norvegicus (Rat).